Reading from the N-terminus, the 76-residue chain is Small ribosomal subunit protein bS18 (76 aa).

The protein belongs to the bacterial ribosomal protein bS18 family. In terms of assembly, part of the 30S ribosomal subunit. Forms a tight heterodimer with protein bS6.

Binds as a heterodimer with protein bS6 to the central domain of the 16S rRNA, where it helps stabilize the platform of the 30S subunit. The protein is Small ribosomal subunit protein bS18 of Aeromonas salmonicida (strain A449).